The primary structure comprises 435 residues: GTPase Der (435 aa).

EngA-type G domains follow at residues 3–168 (PLVA…PDET) and 176–351 (IKLA…QNRQ). Residues 9–16 (GRPNVGKS), 56–60 (DTGGY), 120–123 (NKVE), 182–189 (GRPNVGKS), 229–233 (DTAGL), and 294–297 (NKWD) contribute to the GTP site. Residues 352–435 (KKISTSELNR…VPVSFRYRKK (84 aa)) form the KH-like domain.

This sequence belongs to the TRAFAC class TrmE-Era-EngA-EngB-Septin-like GTPase superfamily. EngA (Der) GTPase family. As to quaternary structure, associates with the 50S ribosomal subunit.

Its function is as follows. GTPase that plays an essential role in the late steps of ribosome biogenesis. This Chlorobium phaeobacteroides (strain BS1) protein is GTPase Der.